Consider the following 277-residue polypeptide: MGIKTYRPKTSSLRYKTTLSFDELSKGNDPLKSLTKGKVSRAGRDSSGRISVRRRGGGHKRRYREIDFARRDKFGIPARVAAIEYDPNRSPNIALLVYRDGDKRYIIAPKGVKVGDILESGPNAPIKIGNALPLENIPVGKMVHNIELNIGKGGQLVRGAGGYAMIIASDGDYVTVKLPSGEMRMIFKKCIATLGEVGNEDYMNVSIGKAGKSRWLGRRPKVRGVAMNPIDHPHGGGEGKTSGGRHPVSPWGQPAKGYKTRKKNKYSDKFIVKRRNN.

2 disordered regions span residues 32–58 and 225–277; these read KSLT…RGGG and VAMN…RRNN.

It belongs to the universal ribosomal protein uL2 family. In terms of assembly, part of the 50S ribosomal subunit. Forms a bridge to the 30S subunit in the 70S ribosome.

Its function is as follows. One of the primary rRNA binding proteins. Required for association of the 30S and 50S subunits to form the 70S ribosome, for tRNA binding and peptide bond formation. It has been suggested to have peptidyltransferase activity; this is somewhat controversial. Makes several contacts with the 16S rRNA in the 70S ribosome. This chain is Large ribosomal subunit protein uL2, found in Borrelia duttonii (strain Ly).